Reading from the N-terminus, the 539-residue chain is uncharacterized protein (539 aa).

ABC transporter domains lie at 8 to 265 (VRIT…SRAL) and 307 to 537 (IELD…IGDM). 339–346 (GDNGSGKS) provides a ligand contact to ATP.

This sequence belongs to the ABC transporter superfamily.

It localises to the mitochondrion. This is an uncharacterized protein from Saccharomyces cerevisiae (strain ATCC 204508 / S288c) (Baker's yeast).